Reading from the N-terminus, the 167-residue chain is Urease accessory protein UreE (167 aa).

The segment at 137 to 158 (EAGAYQSAPHGHSHSHAHGHDH) is disordered.

It belongs to the UreE family.

It is found in the cytoplasm. In terms of biological role, involved in urease metallocenter assembly. Binds nickel. Probably functions as a nickel donor during metallocenter assembly. This Pseudomonas putida (strain ATCC 700007 / DSM 6899 / JCM 31910 / BCRC 17059 / LMG 24140 / F1) protein is Urease accessory protein UreE.